Reading from the N-terminus, the 264-residue chain is Teichoic acids export ATP-binding protein TagH (264 aa).

Residues 24 to 243 (IKDALIPKNK…YEQFLKDFKK (220 aa)) enclose the ABC transporter domain. 57–64 (GINGSGKS) is an ATP binding site.

It belongs to the ABC transporter superfamily. Teichoic acids exporter (TC 3.A.1.104.1) family. As to quaternary structure, the complex is composed of two ATP-binding proteins (TagH) and two transmembrane proteins (TagG).

The protein localises to the cell membrane. The catalysed reaction is ATP + H2O + teichoic acidSide 1 = ADP + phosphate + teichoic acidSide 2.. In terms of biological role, part of the ABC transporter complex TagGH involved in teichoic acids export. Responsible for energy coupling to the transport system. This chain is Teichoic acids export ATP-binding protein TagH, found in Staphylococcus haemolyticus (strain JCSC1435).